The chain runs to 534 residues: MTKYIFVTGGVVSSIGKGIVAASLGRLLKNRGLKVTIQKFDPYINIDPGTMSPYQHGEVYVTDDGVETDLDLGHYERFIDINLNKYSNVTTGKIYSEVLRKERKGEYLGATVQVIPHITDALKDKIKRAATTTDSDVVITEVGGTVGDIESLPFLEALRQMKADVGSDNVMYIHTTLLPYLKAAGEMKTKPTQHSVKELRGLGIQPNMLVIRTEEPAGQGIKNKLAQFCDVAPEAVIESLDVEHIYQVPLNMQAQGMDQIVCDHLKLNAPAADMTEWSAMVDKVLNLKKTTKIALVGKYVELHDAYLSVVEALKHSGLANDTAIDIDWVNANDLTAENVASRLADADGIIVPGGFGQRGTEGKIQAIRYARENDVPMLGVCLGMQLTCIEFARHVLHLDGANSAELDPETQYPIIDIMRDQIDIEDMGGTLRLGLYPCKLKPGSKAAAAYGNQEVVQRRHRHRYEFNTKFREQFEAEGFVFSGVSPDNRLMEVVELPDKKFFVAAQYHPEYHSRPNHAEELYSAFVTAAVENAK.

The tract at residues 1–267 (MTKYIFVTGG…DQIVCDHLKL (267 aa)) is amidoligase domain. Residue Ser-13 participates in CTP binding. Ser-13 contributes to the UTP binding site. 14-19 (SIGKGI) is an ATP binding site. An L-glutamine-binding site is contributed by Tyr-54. Residue Asp-71 coordinates ATP. 2 residues coordinate Mg(2+): Asp-71 and Glu-141. Residues 148–150 (DIE), 188–193 (KTKPTQ), and Lys-224 each bind CTP. UTP is bound by residues 188-193 (KTKPTQ) and Lys-224. One can recognise a Glutamine amidotransferase type-1 domain in the interval 292–534 (KIALVGKYVE…FVTAAVENAK (243 aa)). Position 354 (Gly-354) interacts with L-glutamine. Catalysis depends on Cys-381, which acts as the Nucleophile; for glutamine hydrolysis. L-glutamine is bound by residues 382–385 (LGMQ), Glu-405, and Arg-463. Active-site residues include His-508 and Glu-510.

Belongs to the CTP synthase family. As to quaternary structure, homotetramer.

The enzyme catalyses UTP + L-glutamine + ATP + H2O = CTP + L-glutamate + ADP + phosphate + 2 H(+). The catalysed reaction is L-glutamine + H2O = L-glutamate + NH4(+). It carries out the reaction UTP + NH4(+) + ATP = CTP + ADP + phosphate + 2 H(+). It participates in pyrimidine metabolism; CTP biosynthesis via de novo pathway; CTP from UDP: step 2/2. With respect to regulation, allosterically activated by GTP, when glutamine is the substrate; GTP has no effect on the reaction when ammonia is the substrate. The allosteric effector GTP functions by stabilizing the protein conformation that binds the tetrahedral intermediate(s) formed during glutamine hydrolysis. Inhibited by the product CTP, via allosteric rather than competitive inhibition. In terms of biological role, catalyzes the ATP-dependent amination of UTP to CTP with either L-glutamine or ammonia as the source of nitrogen. Regulates intracellular CTP levels through interactions with the four ribonucleotide triphosphates. The sequence is that of CTP synthase from Streptococcus thermophilus (strain CNRZ 1066).